A 596-amino-acid chain; its full sequence is Protein Malvolio (596 aa).

The tract at residues 1-34 is disordered; it reads MSSNEAYHEPGAGGDGPGGSSGASGGGSQRSNQL. Gly residues predominate over residues 11 to 28; the sequence is GAGGDGPGGSSGASGGGS. An N-linked (GlcNAc...) asparagine glycan is attached at asparagine 41. The next 7 helical transmembrane spans lie at 77 to 97, 105 to 125, 154 to 174, 186 to 206, 216 to 236, 263 to 283, and 309 to 329; these read LWAFTGPGFLMSIAYLDPGNI, AAAKYKILWVLLWATVLGLLM, WILWIMIEIAIIGSDMQEVIG, VVPLWGGVLITIVDTFTFLFL, FLFGTLITIMAVSFGYEYIVS, AVGVVGAVIMPHNLYLHSALV, and VALFVSFIINLFVVAVFAHGM. A glycan (N-linked (GlcNAc...) asparagine) is linked at asparagine 359. Transmembrane regions (helical) follow at residues 373-393, 424-444, 463-483, 490-510, and 520-540; these read LFLGCTFGAVAMYIWGVGILA, VLVTRCIAIIPTFCLAMFSKM, PFAAIPTIAFTSCAAIMGEFV, IVSILLTIVVIGVNLYFVVVQ, and LLALVCIFAILYILFNLYLVI. Residue asparagine 574 is glycosylated (N-linked (GlcNAc...) asparagine).

This sequence belongs to the NRAMP family. Expressed in macrophages and in the nervous system.

The protein resides in the membrane. Its function is as follows. Putative transporter required for normal taste behavior. May be a nitrite/nitrate transporter. The sequence is that of Protein Malvolio (Mvl) from Drosophila melanogaster (Fruit fly).